A 334-amino-acid polypeptide reads, in one-letter code: Large ribosomal subunit protein uL3 (334 aa).

Positions 1–10 (MGMKKNRPRR) are enriched in basic residues. The disordered stretch occupies residues 1 to 21 (MGMKKNRPRRGSLAFSPRKRA).

This sequence belongs to the universal ribosomal protein uL3 family. As to quaternary structure, part of the 50S ribosomal subunit. Forms a cluster with proteins L14 and L24e.

Its function is as follows. One of the primary rRNA binding proteins, it binds directly near the 3'-end of the 23S rRNA, where it nucleates assembly of the 50S subunit. In Methanococcus maripaludis (strain DSM 14266 / JCM 13030 / NBRC 101832 / S2 / LL), this protein is Large ribosomal subunit protein uL3.